The chain runs to 36 residues: Photosystem I reaction center subunit VIII (36 aa).

Residues 8–28 (SFFVPLVCLVFPAIAMAFLFV) traverse the membrane as a helical segment.

Belongs to the PsaI family.

The protein resides in the plastid. Its subcellular location is the chloroplast thylakoid membrane. Functionally, may help in the organization of the PsaL subunit. This is Photosystem I reaction center subunit VIII from Chara vulgaris (Common stonewort).